Consider the following 150-residue polypeptide: Large ribosomal subunit protein uL23m (150 aa).

Belongs to the universal ribosomal protein uL23 family. In terms of assembly, component of the mitochondrial ribosome large subunit (39S) which comprises a 16S rRNA and about 50 distinct proteins.

It localises to the mitochondrion. The polypeptide is Large ribosomal subunit protein uL23m (mRpL23) (Drosophila melanogaster (Fruit fly)).